Reading from the N-terminus, the 208-residue chain is ATP-dependent Clp protease proteolytic subunit (208 aa).

Catalysis depends on serine 107, which acts as the Nucleophile. Histidine 132 is a catalytic residue.

This sequence belongs to the peptidase S14 family. As to quaternary structure, fourteen ClpP subunits assemble into 2 heptameric rings which stack back to back to give a disk-like structure with a central cavity, resembling the structure of eukaryotic proteasomes.

The protein localises to the cytoplasm. The catalysed reaction is Hydrolysis of proteins to small peptides in the presence of ATP and magnesium. alpha-casein is the usual test substrate. In the absence of ATP, only oligopeptides shorter than five residues are hydrolyzed (such as succinyl-Leu-Tyr-|-NHMec, and Leu-Tyr-Leu-|-Tyr-Trp, in which cleavage of the -Tyr-|-Leu- and -Tyr-|-Trp bonds also occurs).. In terms of biological role, cleaves peptides in various proteins in a process that requires ATP hydrolysis. Has a chymotrypsin-like activity. Plays a major role in the degradation of misfolded proteins. In Jannaschia sp. (strain CCS1), this protein is ATP-dependent Clp protease proteolytic subunit.